Here is a 436-residue protein sequence, read N- to C-terminus: Trigger factor (436 aa).

The PPIase FKBP-type domain maps to 163-248 (GDRVTVDFEG…LKKIEAAHLP (86 aa)).

This sequence belongs to the FKBP-type PPIase family. Tig subfamily.

It is found in the cytoplasm. It carries out the reaction [protein]-peptidylproline (omega=180) = [protein]-peptidylproline (omega=0). Functionally, involved in protein export. Acts as a chaperone by maintaining the newly synthesized protein in an open conformation. Functions as a peptidyl-prolyl cis-trans isomerase. The protein is Trigger factor of Albidiferax ferrireducens (strain ATCC BAA-621 / DSM 15236 / T118) (Rhodoferax ferrireducens).